Reading from the N-terminus, the 388-residue chain is Probable proton-coupled zinc antiporter SLC30A3 (388 aa).

Residues 1–42 (MEPSPASGGSETTRLVSPRDRSSAGGGLRLKSLFTEPSEPLP) are disordered. The Cytoplasmic portion of the chain corresponds to 1–75 (MEPSPASGGS…SPERAQARRQ (75 aa)). Serine 63 and serine 66 each carry phosphoserine. Residues 76–96 (LYAACVVCFIFMAGEVVGGYL) form a helical membrane-spanning segment. Residues 97-105 (AHSLAIMTD) lie on the Lumenal side of the membrane. Residues 106–126 (AAHLLADIGSMMASLFSLWLS) form a helical membrane-spanning segment. Zn(2+) contacts are provided by histidine 108 and aspartate 112. Over 127–145 (TRPATRTMTFGWHRSETLG) the chain is Cytoplasmic. A helical transmembrane segment spans residues 146-166 (ALASVVSLWIVTGILLYLAFL). The Lumenal segment spans residues 167-177 (RLLHSDYHIEA). A helical membrane pass occupies residues 178–198 (GAMLLTASIAVCANMIMAFVL). The Cytoplasmic segment spans residues 199 to 235 (HQTGAPHSHGPRGAEYAPLEEGHGHPLSLGNTSVRAA). The chain crosses the membrane as a helical span at residues 236-256 (FVHVLGDLLQSLGVLAASILI). Histidine 238 and aspartate 242 together coordinate Zn(2+). Residues 257-263 (YFKPQYK) lie on the Lumenal side of the membrane. The chain crosses the membrane as a helical span at residues 264-284 (VADPISTFLFSICALGSTAPT). The Cytoplasmic segment spans residues 285–388 (LRDVLLVLME…CLRCREPPKA (104 aa)).

This sequence belongs to the cation diffusion facilitator (CDF) transporter (TC 2.A.4) family. SLC30A subfamily. Homodimer. Homodimerization could regulate efficiency of zinc transport. Interacts with TMEM163.

The protein localises to the cytoplasmic vesicle. Its subcellular location is the secretory vesicle. It is found in the synaptic vesicle membrane. The protein resides in the synapse. It localises to the synaptosome. The protein localises to the late endosome membrane. Its subcellular location is the lysosome membrane. The catalysed reaction is Zn(2+)(in) + 2 H(+)(out) = Zn(2+)(out) + 2 H(+)(in). Its function is as follows. Probable proton-coupled zinc ion antiporter mediating the import of zinc from cytoplasm into synaptic vesicles and participating to cellular zinc ion homeostasis in the brain. This is Probable proton-coupled zinc antiporter SLC30A3 from Rattus norvegicus (Rat).